The following is a 286-amino-acid chain: 4-diphosphocytidyl-2-C-methyl-D-erythritol kinase (286 aa).

Lys11 is a catalytic residue. Position 94–104 (94–104 (PMGGGIGGGSS)) interacts with ATP. Asp136 is a catalytic residue.

This sequence belongs to the GHMP kinase family. IspE subfamily.

It catalyses the reaction 4-CDP-2-C-methyl-D-erythritol + ATP = 4-CDP-2-C-methyl-D-erythritol 2-phosphate + ADP + H(+). The protein operates within isoprenoid biosynthesis; isopentenyl diphosphate biosynthesis via DXP pathway; isopentenyl diphosphate from 1-deoxy-D-xylulose 5-phosphate: step 3/6. Functionally, catalyzes the phosphorylation of the position 2 hydroxy group of 4-diphosphocytidyl-2C-methyl-D-erythritol. In Pseudomonas putida (strain GB-1), this protein is 4-diphosphocytidyl-2-C-methyl-D-erythritol kinase.